A 207-amino-acid polypeptide reads, in one-letter code: Dephospho-CoA kinase (207 aa).

Residues 10-207 form the DPCK domain; sequence ILGLTGGIGS…FYLTLSGGQS (198 aa). 18–23 contacts ATP; that stretch reads GSGKSA.

Belongs to the CoaE family.

The protein localises to the cytoplasm. The enzyme catalyses 3'-dephospho-CoA + ATP = ADP + CoA + H(+). Its pathway is cofactor biosynthesis; coenzyme A biosynthesis; CoA from (R)-pantothenate: step 5/5. Catalyzes the phosphorylation of the 3'-hydroxyl group of dephosphocoenzyme A to form coenzyme A. This Pseudomonas fluorescens (strain Pf0-1) protein is Dephospho-CoA kinase.